We begin with the raw amino-acid sequence, 431 residues long: Glutamate-1-semialdehyde 2,1-aminomutase (431 aa).

N6-(pyridoxal phosphate)lysine is present on Lys-269.

This sequence belongs to the class-III pyridoxal-phosphate-dependent aminotransferase family. HemL subfamily. In terms of assembly, homodimer. Pyridoxal 5'-phosphate is required as a cofactor.

It is found in the cytoplasm. The enzyme catalyses (S)-4-amino-5-oxopentanoate = 5-aminolevulinate. The protein operates within porphyrin-containing compound metabolism; protoporphyrin-IX biosynthesis; 5-aminolevulinate from L-glutamyl-tRNA(Glu): step 2/2. The protein is Glutamate-1-semialdehyde 2,1-aminomutase of Francisella tularensis subsp. mediasiatica (strain FSC147).